Consider the following 804-residue polypeptide: MLVSYNWLQDFLNLDQEPHALAEKITRTGVEIADVKHPEEGLKKLVVGKVIDCEGVEGTHLHLTHVDVGEDEPLQIVCGAPNVAAGELVIVALHGARIAGNEKIKKGKIRGIESYGMICGLQEIGFSDSVVPEEFADGIYVFPEDADVKPGQDVYEALGMDDYILDFDITPNRADTLGMEGAAYEVGAIVDQKPKIGDVVLKEDGPDWTSSLEANVDEKLAPKFYLRKLTGVKIQPSPLWMQRRLWNAGIRPINNVVDVTNYVMLLTGQPMHAYDAKTFETGKLEVRLANKGEKLTLLNEKEVELDPRDIIITDGEKPVMMAGVMGGLNSEITSETTDVILESAIFDPTLVRKSALRHANRTEASSRYEKGVNWDATEKAINMAALLLRNDAQATIDEGIIKATDTKREPVVVKTTVSHINDVLGSEISAEEMIKIFDRLGFVVDQDGDNIAVHVPNRRWDISIPADLVEEVGRIYGYDNLKSTQPLLAETHGGYSEKEEMMRRMKAIVEGQGLMEAISYSLTSPEKAVRYTKDPKDIVKVQMPLNSSRSVMRQNLMTGLVDAASYNFARKQTQLALFEQGRVYDHEGGTFNEHEHLAALYSGNTFAENWQHLTQKVDFYFVKGQLTNLFTAIGIDPEKVTYEAAPILGMHPTRTAAIYIDKQYVGMIGMIAHAVTLADKALRGAELYGYEINLDTIIPMLTKGMTAVPAPKFPAIERDLSLLVDKEITNQEVENVIKSNAGKYLVDLKVIDVYEGSHIAIGKKSFAYNLTFLNRKDTLTDKVVNNAMDKIIAGLENDLDIKVR.

A tRNA-binding domain is found at 39–155; the sequence is EEGLKKLVVG…ADVKPGQDVY (117 aa). Residues 408–483 form the B5 domain; that stretch reads REPVVVKTTV…RIYGYDNLKS (76 aa). Positions 461, 467, 470, and 471 each coordinate Mg(2+). In terms of domain architecture, FDX-ACB spans 711–804; that stretch reads PKFPAIERDL…LENDLDIKVR (94 aa).

It belongs to the phenylalanyl-tRNA synthetase beta subunit family. Type 1 subfamily. Tetramer of two alpha and two beta subunits. Mg(2+) is required as a cofactor.

The protein localises to the cytoplasm. The catalysed reaction is tRNA(Phe) + L-phenylalanine + ATP = L-phenylalanyl-tRNA(Phe) + AMP + diphosphate + H(+). This chain is Phenylalanine--tRNA ligase beta subunit, found in Lactobacillus acidophilus (strain ATCC 700396 / NCK56 / N2 / NCFM).